The following is a 216-amino-acid chain: Leucyl/phenylalanyl-tRNA--protein transferase (216 aa).

It belongs to the L/F-transferase family.

It localises to the cytoplasm. It catalyses the reaction N-terminal L-lysyl-[protein] + L-leucyl-tRNA(Leu) = N-terminal L-leucyl-L-lysyl-[protein] + tRNA(Leu) + H(+). The enzyme catalyses N-terminal L-arginyl-[protein] + L-leucyl-tRNA(Leu) = N-terminal L-leucyl-L-arginyl-[protein] + tRNA(Leu) + H(+). It carries out the reaction L-phenylalanyl-tRNA(Phe) + an N-terminal L-alpha-aminoacyl-[protein] = an N-terminal L-phenylalanyl-L-alpha-aminoacyl-[protein] + tRNA(Phe). Its function is as follows. Functions in the N-end rule pathway of protein degradation where it conjugates Leu, Phe and, less efficiently, Met from aminoacyl-tRNAs to the N-termini of proteins containing an N-terminal arginine or lysine. The protein is Leucyl/phenylalanyl-tRNA--protein transferase of Maricaulis maris (strain MCS10) (Caulobacter maris).